The sequence spans 178 residues: Sec-independent protein translocase protein TatB (178 aa).

The chain crosses the membrane as a helical span at residues 2–22 (LPEIGAAELLIIAAVALIVVG). Residues 104-178 (HSPTGYENTV…KARKTAGSAE (75 aa)) form a disordered region. Residues 114–131 (EPPPPEPEPQPAAEPAPK) show a composition bias toward pro residues. The span at 141–154 (PKAAAAPKAAAKPK) shows a compositional bias: low complexity.

It belongs to the TatB family. In terms of assembly, the Tat system comprises two distinct complexes: a TatABC complex, containing multiple copies of TatA, TatB and TatC subunits, and a separate TatA complex, containing only TatA subunits. Substrates initially bind to the TatABC complex, which probably triggers association of the separate TatA complex to form the active translocon.

The protein resides in the cell inner membrane. Functionally, part of the twin-arginine translocation (Tat) system that transports large folded proteins containing a characteristic twin-arginine motif in their signal peptide across membranes. Together with TatC, TatB is part of a receptor directly interacting with Tat signal peptides. TatB may form an oligomeric binding site that transiently accommodates folded Tat precursor proteins before their translocation. In Phenylobacterium zucineum (strain HLK1), this protein is Sec-independent protein translocase protein TatB.